A 273-amino-acid polypeptide reads, in one-letter code: Embryonic polyadenylate-binding protein 2 (273 aa).

The interval 22-57 (SSDPEAQGWGAWGRTEKTSLVPRAGSRAGSDKEAEE) is disordered. One can recognise an RRM domain in the interval 143–220 (RSVFVGNVDY…RVIKVLPKRT (78 aa)).

It localises to the cytoplasm. In terms of biological role, binds the poly(A) tail of mRNA. In Mus musculus (Mouse), this protein is Embryonic polyadenylate-binding protein 2 (Pabpn1l).